We begin with the raw amino-acid sequence, 485 residues long: Glutamate--tRNA ligase (485 aa).

A 'HIGH' region motif is present at residues 11 to 21; that stretch reads PSPTGLLHIGN. Positions 255–259 match the 'KMSKS' region motif; sequence KLSKR. Lysine 258 is an ATP binding site.

It belongs to the class-I aminoacyl-tRNA synthetase family. Glutamate--tRNA ligase type 1 subfamily. In terms of assembly, monomer.

The protein localises to the cytoplasm. It carries out the reaction tRNA(Glu) + L-glutamate + ATP = L-glutamyl-tRNA(Glu) + AMP + diphosphate. Catalyzes the attachment of glutamate to tRNA(Glu) in a two-step reaction: glutamate is first activated by ATP to form Glu-AMP and then transferred to the acceptor end of tRNA(Glu). The chain is Glutamate--tRNA ligase from Streptococcus sanguinis (strain SK36).